Here is a 359-residue protein sequence, read N- to C-terminus: 3-dehydroquinate synthase (359 aa).

Residues 71–76 (DAEAAK), 105–109 (GAVTD), 129–130 (TT), K142, and K151 each bind NAD(+). Zn(2+)-binding residues include E184, H247, and H263.

The protein belongs to the sugar phosphate cyclases superfamily. Dehydroquinate synthase family. Requires NAD(+) as cofactor. Co(2+) serves as cofactor. The cofactor is Zn(2+).

It is found in the cytoplasm. It carries out the reaction 7-phospho-2-dehydro-3-deoxy-D-arabino-heptonate = 3-dehydroquinate + phosphate. The protein operates within metabolic intermediate biosynthesis; chorismate biosynthesis; chorismate from D-erythrose 4-phosphate and phosphoenolpyruvate: step 2/7. Catalyzes the conversion of 3-deoxy-D-arabino-heptulosonate 7-phosphate (DAHP) to dehydroquinate (DHQ). In Leifsonia xyli subsp. xyli (strain CTCB07), this protein is 3-dehydroquinate synthase.